Consider the following 170-residue polypeptide: Probable T4-type lysozyme 2 (170 aa).

Catalysis depends on Glu13, which acts as the Proton donor. Residue Asp22 is the Nucleophile of the active site.

This sequence belongs to the glycosyl hydrolase 24 family.

The enzyme catalyses Hydrolysis of (1-&gt;4)-beta-linkages between N-acetylmuramic acid and N-acetyl-D-glucosamine residues in a peptidoglycan and between N-acetyl-D-glucosamine residues in chitodextrins.. The chain is Probable T4-type lysozyme 2 from Dictyostelium discoideum (Social amoeba).